Consider the following 225-residue polypeptide: Putative tyrosine-protein phosphatase OCA1 (225 aa).

Positions Met1–Asn11 are enriched in acidic residues. Residues Met1–Thr24 are disordered. Residues Leu12–Thr24 show a composition bias toward polar residues. A Tyrosine-protein phosphatase domain is found at Asn42 to Lys196. Cys138 acts as the Phosphocysteine intermediate in catalysis.

This sequence belongs to the protein-tyrosine phosphatase family.

It localises to the cytoplasm. It catalyses the reaction O-phospho-L-tyrosyl-[protein] + H2O = L-tyrosyl-[protein] + phosphate. In terms of biological role, putative tyrosine-protein phosphatase required for protection against superoxide stress. The polypeptide is Putative tyrosine-protein phosphatase OCA1 (OCA1) (Eremothecium gossypii (strain ATCC 10895 / CBS 109.51 / FGSC 9923 / NRRL Y-1056) (Yeast)).